Here is a 209-residue protein sequence, read N- to C-terminus: uncharacterized protein (209 aa).

The interval 177–209 (DNSDNSSDSDDSDSLDGSDDLNDSDNVDNLFVG) is disordered. The span at 183–202 (SDSDDSDSLDGSDDLNDSDN) shows a compositional bias: acidic residues.

This is an uncharacterized protein from Acanthamoeba polyphaga (Amoeba).